Here is a 117-residue protein sequence, read N- to C-terminus: Large ribosomal subunit protein uL23 (117 aa).

This sequence belongs to the universal ribosomal protein uL23 family. Part of the 50S ribosomal subunit. Contacts protein L29, and trigger factor when it is bound to the ribosome.

Functionally, one of the early assembly proteins it binds 23S rRNA. One of the proteins that surrounds the polypeptide exit tunnel on the outside of the ribosome. Forms the main docking site for trigger factor binding to the ribosome. The polypeptide is Large ribosomal subunit protein uL23 (Acetivibrio thermocellus (strain ATCC 27405 / DSM 1237 / JCM 9322 / NBRC 103400 / NCIMB 10682 / NRRL B-4536 / VPI 7372) (Clostridium thermocellum)).